A 572-amino-acid polypeptide reads, in one-letter code: Protein 5NUC (572 aa).

The first 25 residues, 1–25 (MLFFLNFFVLVFSIELALLTASAAA), serve as a signal peptide directing secretion. Zn(2+)-binding residues include Asp-39 and His-41. Cys-54 and Cys-64 are oxidised to a cystine. Asn-82 carries an N-linked (GlcNAc...) asparagine glycan. Residues Asp-93, Asn-125, His-227, and His-250 each coordinate Zn(2+). Cys-360 and Cys-365 are oxidised to a cystine. The substrate site is built by Arg-361, Gln-399, Arg-404, and Phe-427. N-linked (GlcNAc...) asparagine glycosylation is found at Asn-454 and Asn-490. Cys-488 and Cys-491 are disulfide-bonded. Position 512 to 518 (512 to 518 (FMKDGGD)) interacts with substrate.

The protein belongs to the 5'-nucleotidase family. Zn(2+) serves as cofactor.

It carries out the reaction UDP-sugar + H2O = UMP + alpha-D-aldose 1-phosphate.. The enzyme catalyses a ribonucleoside 5'-phosphate + H2O = a ribonucleoside + phosphate. Degradation of external UDP-glucose to uridine monophosphate and glucose-1-phosphate, which can then be used by the cell. The chain is Protein 5NUC (5NUC) from Lutzomyia longipalpis (Sand fly).